Consider the following 245-residue polypeptide: MASPSRRLQTKPVITCLKSVLLIYTFIFWITGVILLAVGIWGKVSLENYFSLLNEKATNVPFVLIGTGTVIILLGTFGCFATCRTSAWMLKLYAMFLTLIFLVELVAAIVGFVFRHEIKNSFKSNYENALKEYNSTGDYRSEAVDKIQSTLHCCGVTNYGDWKGTNYYSETGFPKSCCKLEGCYPQRDADKVNEEGCFIKVMTTIESEMGVVAGISFGVACFQLIGIFLAYCLSRAITNNQYEIV.

At 1-19 the chain is on the cytoplasmic side; the sequence is MASPSRRLQTKPVITCLKS. The chain crosses the membrane as a helical span at residues 20–40; sequence VLLIYTFIFWITGVILLAVGI. Residues 41-59 lie on the Extracellular side of the membrane; the sequence is WGKVSLENYFSLLNEKATN. Residues 60–80 traverse the membrane as a helical segment; the sequence is VPFVLIGTGTVIILLGTFGCF. The Cytoplasmic portion of the chain corresponds to 81–93; the sequence is ATCRTSAWMLKLY. A helical membrane pass occupies residues 94–114; sequence AMFLTLIFLVELVAAIVGFVF. Topologically, residues 115–208 are extracellular; the sequence is RHEIKNSFKS…IKVMTTIESE (94 aa). N-linked (GlcNAc...) asparagine glycosylation is present at Asn-134. The helical transmembrane segment at 209-229 threads the bilayer; the sequence is MGVVAGISFGVACFQLIGIFL. Over 230-245 the chain is Cytoplasmic; sequence AYCLSRAITNNQYEIV.

It belongs to the tetraspanin (TM4SF) family.

The protein localises to the membrane. This is Tetraspanin-6 (Tspan6) from Mus musculus (Mouse).